Consider the following 493-residue polypeptide: ATP-dependent rRNA helicase RRP3 (493 aa).

Basic and acidic residues-rich tracts occupy residues 26-42 and 51-62; these read ALEN…KDSE and ERPAKKQAKDEK. Positions 26-68 are disordered; the sequence is ALENQKKMQAASRKDSESDSSDEEVERPAKKQAKDEKVEEPEE. The short motif at 73-101 is the Q motif element; the sequence is ESFAQLNLVPELIQACQNLNFTKPTPIQA. The Helicase ATP-binding domain maps to 104 to 276; sequence IPPALAGSDV…RASLTNPVKC (173 aa). Residue 117–124 participates in ATP binding; it reads AQTGSGKT. The short motif at 223-226 is the DEAD box element; it reads DEAD. The region spanning 307 to 453 is the Helicase C-terminal domain; the sequence is LLNEFIGKTV…NIILTLRDSV (147 aa). Positions 467 to 493 are disordered; it reads RNKEKQARGKGRRGRMMAKENMDREEK. A compositionally biased stretch (basic and acidic residues) spans 483-493; it reads MAKENMDREEK.

It belongs to the DEAD box helicase family. DDX47/RRP3 subfamily. As to quaternary structure, interacts with the SSU processome.

It is found in the nucleus. It catalyses the reaction ATP + H2O = ADP + phosphate + H(+). Its function is as follows. ATP-dependent rRNA helicase required for pre-ribosomal RNA processing. Involved in the maturation of the 35S-pre-rRNA and to its cleavage to mature 18S rRNA. This chain is ATP-dependent rRNA helicase RRP3, found in Candida glabrata (strain ATCC 2001 / BCRC 20586 / JCM 3761 / NBRC 0622 / NRRL Y-65 / CBS 138) (Yeast).